We begin with the raw amino-acid sequence, 296 residues long: GTPase Era (296 aa).

The Era-type G domain maps to 2–171; sequence KAGFIAVVGR…LEALDPYLED (170 aa). A G1 region spans residues 10–17; sequence GRPNVGKS. 10–17 lines the GTP pocket; the sequence is GRPNVGKS. A G2 region spans residues 36–40; that stretch reads GTTRD. Residues 57 to 60 form a G3 region; it reads DTPG. Residues 57-61 and 120-123 contribute to the GTP site; these read DTPGI and NKVD. A G4 region spans residues 120 to 123; the sequence is NKVD. The tract at residues 150-152 is G5; it reads ASG. The region spanning 202–279 is the KH type-2 domain; sequence TRDEIPHSVA…YLGLWVKVKD (78 aa).

It belongs to the TRAFAC class TrmE-Era-EngA-EngB-Septin-like GTPase superfamily. Era GTPase family. In terms of assembly, monomer.

It localises to the cytoplasm. Its subcellular location is the cell inner membrane. Functionally, an essential GTPase that binds both GDP and GTP, with rapid nucleotide exchange. Plays a role in 16S rRNA processing and 30S ribosomal subunit biogenesis and possibly also in cell cycle regulation and energy metabolism. This Fusobacterium nucleatum subsp. nucleatum (strain ATCC 25586 / DSM 15643 / BCRC 10681 / CIP 101130 / JCM 8532 / KCTC 2640 / LMG 13131 / VPI 4355) protein is GTPase Era.